We begin with the raw amino-acid sequence, 278 residues long: Serine protease 57 (278 aa).

The N-terminal stretch at 1–31 (MVPGTGGGRDCLTLVVATALTQLLWLPGCCG) is a signal peptide. Residues 34-263 (IVGGHEVKPH…FVSWIWDVVR (230 aa)) form the Peptidase S1 domain. Cys59 and Cys75 are joined by a disulfide. Residues His74 and Asp122 each act as charge relay system in the active site. The N-linked (GlcNAc...) asparagine glycan is linked to Asn129. Disulfide bonds link Cys157–Cys224, Cys188–Cys202, and Cys214–Cys239. Ser218 (charge relay system) is an active-site residue.

This sequence belongs to the peptidase S1 family. In terms of processing, after cleavage of the signal peptide, the N-terminus is probably further processed by CTSC. Processing by CTSC is probably required for accumulation in cytoplasmic granules; in the absence of CTSC the protein does not accumulate. N-glycosylated.

It localises to the cytoplasmic granule lumen. The protein resides in the secreted. Serine protease that cleaves preferentially after Arg residues. Can also cleave after citrulline (deimidated arginine) and methylarginine residues. This chain is Serine protease 57 (Prss57), found in Rattus norvegicus (Rat).